The chain runs to 409 residues: Elongation factor Tu, chloroplastic (409 aa).

The tr-type G domain maps to 10 to 214 (KQHVNIGTIG…NVDTYIPTPV (205 aa)). The segment at 19 to 26 (GHVDHGKT) is G1. 19-26 (GHVDHGKT) lines the GTP pocket. Residue threonine 26 coordinates Mg(2+). Residues 60–64 (GITIN) are G2. A G3 region spans residues 81–84 (DCPG). GTP-binding positions include 81–85 (DCPGH) and 136–139 (NKED). Residues 136-139 (NKED) are G4. The interval 174–176 (SAL) is G5.

This sequence belongs to the TRAFAC class translation factor GTPase superfamily. Classic translation factor GTPase family. EF-Tu/EF-1A subfamily.

The protein localises to the plastid. It localises to the chloroplast. The enzyme catalyses GTP + H2O = GDP + phosphate + H(+). GTP hydrolase that promotes the GTP-dependent binding of aminoacyl-tRNA to the A-site of ribosomes during protein biosynthesis. This chain is Elongation factor Tu, chloroplastic (tufA), found in Tupiella akineta (Green alga).